Reading from the N-terminus, the 122-residue chain is Phospholipase A2 nigroviriditoxin basic subunit B (122 aa).

7 cysteine pairs are disulfide-bonded: Cys26/Cys115, Cys28/Cys44, Cys43/Cys95, Cys49/Cys122, Cys50/Cys88, Cys57/Cys81, and Cys75/Cys86. The Ca(2+) site is built by Tyr27, Gly29, and Gly31. His47 is an active-site residue. Asp48 is a Ca(2+) binding site. Asp89 is an active-site residue.

Belongs to the phospholipase A2 family. Group II subfamily. D49 sub-subfamily. As to quaternary structure, nigroviriditoxin is a heterodimer of an acidic subunit A and a basic subunit B. The cofactor is Ca(2+). In terms of tissue distribution, expressed by the venom gland.

It is found in the secreted. The enzyme catalyses a 1,2-diacyl-sn-glycero-3-phosphocholine + H2O = a 1-acyl-sn-glycero-3-phosphocholine + a fatty acid + H(+). Its function is as follows. Heterodimer A-B: Nigroviriditoxin possesses phospholipase A2 (PLA2) activity. It consists of a non-covalent association of a basic PLA2 subunit B with a non-enzymatic subunit A. Functionally, subunit B: Snake venom phospholipase A2 (PLA2) that induces myonecrosis in mice. PLA2 catalyzes the calcium-dependent hydrolysis of the 2-acyl groups in 3-sn-phosphoglycerides. The polypeptide is Phospholipase A2 nigroviriditoxin basic subunit B (Bothriechis nigroviridis (Black-speckled palm pit viper)).